Reading from the N-terminus, the 518-residue chain is 4-trimethylaminobutyraldehyde dehydrogenase B (518 aa).

NAD(+)-binding positions include Lys-204 and 256–260; that span reads GSVPT. The active-site Proton acceptor is the Glu-278. The active-site Nucleophile is the Cys-312. Position 415 (Glu-415) interacts with NAD(+).

Belongs to the aldehyde dehydrogenase family. Homotetramer.

The protein localises to the cytoplasm. The protein resides in the cytosol. It catalyses the reaction 4-(trimethylamino)butanal + NAD(+) + H2O = 4-(trimethylamino)butanoate + NADH + 2 H(+). The catalysed reaction is an aldehyde + NAD(+) + H2O = a carboxylate + NADH + 2 H(+). The protein operates within amine and polyamine biosynthesis; carnitine biosynthesis. Its function is as follows. Converts gamma-trimethylaminobutyraldehyde into gamma-butyrobetaine with high efficiency (in vitro). Can catalyze the irreversible oxidation of a broad range of aldehydes to the corresponding acids in an NAD-dependent reaction, but with low efficiency. This chain is 4-trimethylaminobutyraldehyde dehydrogenase B (aldh9a1b), found in Danio rerio (Zebrafish).